Reading from the N-terminus, the 1846-residue chain is Brefeldin A-inhibited guanine nucleotide-exchange protein 1 (1846 aa).

Positions 2–224 (YEGKKTKNMF…QEAKQMERER (223 aa)) are DCB; DCB:DCB domain and DCB:HUS domain interaction. A Phosphoserine modification is found at S52. 3 disordered regions span residues 217–248 (AKQM…HLRY), 264–302 (DLDP…DQAT), and 347–410 (VSAS…SPGA). The segment covering 267 to 277 (PQTHDVDKSLQ) has biased composition (basic and acidic residues). Phosphoserine occurs at positions 286, 289, 290, 394, and 407. Residues 391–406 (SVSSNDTQESGNSSGP) show a composition bias toward polar residues. The interval 554–574 (ADAQSVVDIYVNYDCDLNAAN) is HUS; DCB:HUS domain interaction. The segment at 631–684 (PNSQTTLGQEKPSEQEISEIKHPETINRYGSLNSLESTSSSGIGSYSTQMSGTD) is disordered. The span at 641-655 (KPSEQEISEIKHPET) shows a compositional bias: basic and acidic residues. Residues 661-681 (SLNSLESTSSSGIGSYSTQMS) are compositionally biased toward low complexity. The region spanning 688–877 (QFEVLKQQKE…SAIYNEIAGK (190 aa)) is the SEC7 domain. Positions 708 to 712 (KKPKR) match the Nuclear localization signal (NLS) motif. S1076, S1563, and S1566 each carry phosphoserine. Positions 1571–1600 (DSAQPRSSDNRQQAPLVSVSPASEEVSKGR) are disordered. Over residues 1574–1585 (QPRSSDNRQQAP) the composition is skewed to polar residues.

As to quaternary structure, homodimer. Interacts with ARFGEF2/BIG2; both proteins are probably part of the same or very similar macromolecular complexes. Interacts with FKBP2. Interacts with MYO9B. Interacts with PRKAR1A and PRKAR2A. Interacts with PPP1CC. Interacts with NCL, FBL, NUP62 and U3 small nucleolar RNA. Interacts with DPY30. Interacts with PDE3A. Interacts with KANK1. Interacts with TBC1D22A and TBC1D22B. Phosphorylated. In vitro phosphorylated by PKA reducing its GEF activity and dephosphorylated by phosphatase PP1.

It localises to the cytoplasm. The protein resides in the perinuclear region. Its subcellular location is the golgi apparatus. The protein localises to the trans-Golgi network. It is found in the nucleus. It localises to the nucleolus. The protein resides in the nucleus matrix. Its subcellular location is the membrane. Its activity is regulated as follows. Inhibited by brefeldin A. In terms of biological role, promotes guanine-nucleotide exchange on ARF1 and ARF3. Promotes the activation of ARF1/ARF3 through replacement of GDP with GTP. Involved in vesicular trafficking. Required for the maintenance of Golgi structure; the function may be independent of its GEF activity. Required for the maturation of integrin beta-1 in the Golgi. Involved in the establishment and persistence of cell polarity during directed cell movement in wound healing. Proposed to act as A kinase-anchoring protein (AKAP) and may mediate crosstalk between Arf and PKA pathways. Inhibits GAP activity of MYO9B probably through competitive RhoA binding. The function in the nucleus remains to be determined. This chain is Brefeldin A-inhibited guanine nucleotide-exchange protein 1 (Arfgef1), found in Rattus norvegicus (Rat).